A 336-amino-acid chain; its full sequence is MLPFLPEPSLSYTQQNRTAVLLLNLGTPDAPTAQAVRPYLKSFLTDRRVVELPKWLWYPILHGLVLTLRPKKSAHAYEKIWFKEGSPLEVYTARQAAALAKRMPDLIVRHAMTYGNPSVADVLSELKAQGAGRLLVIPMYPQYAASSSGAAVDKVCEQLLLQRNQMSVRTVSRFYDDTGYIDAMKNHILRYWAEHGRGKKLMLSFHGVPQKHYDLGDPYPDECRHTAKLLAEALELTEDQYVVSFQSQFGRAKWVTPSTQDLFGKLPKQGVTELDVFCPGFLADCLETMEEIALMGREQFYEAGGKSYRYIPCLNDNPDWIDALVALAEENLGGWR.

Residues His206 and Glu287 each contribute to the Fe cation site.

It belongs to the ferrochelatase family.

The protein resides in the cytoplasm. The enzyme catalyses heme b + 2 H(+) = protoporphyrin IX + Fe(2+). The protein operates within porphyrin-containing compound metabolism; protoheme biosynthesis; protoheme from protoporphyrin-IX: step 1/1. Functionally, catalyzes the ferrous insertion into protoporphyrin IX. The protein is Ferrochelatase of Neisseria meningitidis serogroup A / serotype 4A (strain DSM 15465 / Z2491).